Consider the following 319-residue polypeptide: Cell division protein PomZ (319 aa).

Residue 61–68 (KGGTGKTS) coordinates ATP.

Belongs to the ParA family. As to quaternary structure, interacts with FtsZ in pull-down experiments.

It localises to the cytoplasm. Its function is as follows. Spatial regulator of cell division that is involved in identifying the incipient division site, recruiting FtsZ to the division site and stabilizing the Z-ring. Binds ATP and GTP. This is Cell division protein PomZ from Myxococcus xanthus (strain DK1622).